The chain runs to 157 residues: 6,7-dimethyl-8-ribityllumazine synthase (157 aa).

Residues phenylalanine 22, 56–58 (AFE), and 81–83 (VLI) each bind 5-amino-6-(D-ribitylamino)uracil. 86-87 (ET) lines the (2S)-2-hydroxy-3-oxobutyl phosphate pocket. The active-site Proton donor is the histidine 89. Phenylalanine 114 provides a ligand contact to 5-amino-6-(D-ribitylamino)uracil. Residue arginine 128 participates in (2S)-2-hydroxy-3-oxobutyl phosphate binding.

This sequence belongs to the DMRL synthase family.

It catalyses the reaction (2S)-2-hydroxy-3-oxobutyl phosphate + 5-amino-6-(D-ribitylamino)uracil = 6,7-dimethyl-8-(1-D-ribityl)lumazine + phosphate + 2 H2O + H(+). Its pathway is cofactor biosynthesis; riboflavin biosynthesis; riboflavin from 2-hydroxy-3-oxobutyl phosphate and 5-amino-6-(D-ribitylamino)uracil: step 1/2. Catalyzes the formation of 6,7-dimethyl-8-ribityllumazine by condensation of 5-amino-6-(D-ribitylamino)uracil with 3,4-dihydroxy-2-butanone 4-phosphate. This is the penultimate step in the biosynthesis of riboflavin. The polypeptide is 6,7-dimethyl-8-ribityllumazine synthase (Chlamydia trachomatis serovar L2 (strain ATCC VR-902B / DSM 19102 / 434/Bu)).